A 1532-amino-acid polypeptide reads, in one-letter code: Multidrug resistance-associated protein 1 (1532 aa).

Topologically, residues 1–33 (MALSSFCSSDGSDPLWDWNVTWHTSNPDFTKCF) are extracellular. Residue Asn19 is glycosylated (N-linked (GlcNAc...) asparagine). A helical membrane pass occupies residues 34–54 (QNTVLTWVPCFYLWSCFPLYF). Topologically, residues 55–74 (LYLSRHDRGYIQMTHLNKAK) are cytoplasmic. A helical transmembrane segment spans residues 75-95 (TALGFFLWIICWADLFYSFWE). The Extracellular segment spans residues 96–100 (RSQGM). The chain crosses the membrane as a helical span at residues 101 to 121 (LLAPVLLVSPTLLGITMLLAT). The Cytoplasmic segment spans residues 122–133 (FLIQFERRKGVQ). Residues 134 to 154 (SSGIMLTFWLVALLCALAILR) traverse the membrane as a helical segment. Residues 155–172 (SKIISALKKDAQVDMFRD) are Extracellular-facing. Residues 173–193 (SAFYLYFTLVFIQLVLSCFSD) form a helical membrane-spanning segment. Over 194–317 (SSPLFSETVR…KDRDPSLFKV (124 aa)) the chain is Cytoplasmic. Tyr277 carries the phosphotyrosine modification. Residue Ser290 is modified to Phosphoserine. Residues 318–338 (LYKTFGPYFLMSFLYKALHDL) traverse the membrane as a helical segment. The ABC transmembrane type-1 1 domain occupies 326 to 609 (FLMSFLYKAL…LPMVISSIVQ (284 aa)). The Extracellular portion of the chain corresponds to 339–364 (MMFAGPEILELIINFVNDREAPDWQG). The helical transmembrane segment at 365–385 (YLYTALLFVSACLQTLALHQY) threads the bilayer. Over 386–441 (FHICFVTGMRIKTAVVGAVYRKALVITNSARKSSTVGEIVNLMSVDAQRFMDLATY) the chain is Cytoplasmic. The chain crosses the membrane as a helical span at residues 442–462 (INMIWSAPLQVTLALYFLWLN). Residues 463 to 465 (LGP) lie on the Extracellular side of the membrane. Residues 466 to 486 (SVLAGVAVMILMVPFNAVMAM) form a helical membrane-spanning segment. Residues 487–548 (KTKTYQVAHM…VLKKSAYLAA (62 aa)) lie on the Cytoplasmic side of the membrane. N6-succinyllysine is present on Lys504. The chain crosses the membrane as a helical span at residues 549-569 (VGTFTWVCTPFLVALSTFAVF). Residues 570–591 (VTVDEKNILDAKKAFVSLALFN) are Extracellular-facing. A helical transmembrane segment spans residues 592-612 (ILRFPLNILPMVISSIVQASV). Residues 613–967 (SLKRLRIFLS…VKLSVYWNYM (355 aa)) are Cytoplasmic-facing. The region spanning 645–869 (ITVKNATFTW…DGAFAEFVRT (225 aa)) is the ABC transporter 1 domain. 679–686 (GQVGCGKS) provides a ligand contact to ATP. 4 positions are modified to phosphoserine: Ser879, Ser883, Ser916, and Ser931. Residues 968-988 (KAIGLCISFLSIFLFLCNHVS) form a helical membrane-spanning segment. In terms of domain architecture, ABC transmembrane type-1 2 spans 975 to 1257 (SFLSIFLFLC…LVRMSSEMET (283 aa)). Residues 989–1026 (ALASNYWLSLWTDDRPAVNGTQENRNFRLSVYGALGIL) are Extracellular-facing. The helical transmembrane segment at 1027–1047 (QGVAVFGYSMAVSIGGIFASR) threads the bilayer. Over 1048 to 1090 (RLHLDLLQNVLRSPMSFFERTPSGNLVNRFSKELDTVDSMIPQ) the chain is Cytoplasmic. Residues 1091–1111 (VIKMFMGSLFSVIGAVIIILL) traverse the membrane as a helical segment. Ala1112 is a topological domain (extracellular). The chain crosses the membrane as a helical span at residues 1113-1133 (TPIAAVIIPPLGLVYFFVQRF). Over 1134–1204 (YVASSRQLKR…VANRWLAVRL (71 aa)) the chain is Cytoplasmic. Residues 1205-1225 (ECVGNCIVLFAALFAVISRHS) form a helical membrane-spanning segment. The Extracellular segment spans residues 1226-1227 (LS). The chain crosses the membrane as a helical span at residues 1228 to 1248 (AGLVGLSVSYSLQITAYLNWL). Residues 1249-1532 (VRMSSEMETN…YSMAKDAGLV (284 aa)) lie on the Cytoplasmic side of the membrane. The 235-residue stretch at 1294 to 1528 (VEFRDYCLRY…RGVFYSMAKD (235 aa)) folds into the ABC transporter 2 domain. An ATP-binding site is contributed by 1328-1335 (GRTGAGKS).

Belongs to the ABC transporter superfamily. ABCC family. Conjugate transporter (TC 3.A.1.208) subfamily. Glycosylated. As to expression, skeletal muscle, brain, heart, spleen, lung and kidney.

The protein resides in the cell membrane. It localises to the basolateral cell membrane. The catalysed reaction is ATP + H2O + xenobioticSide 1 = ADP + phosphate + xenobioticSide 2.. The enzyme catalyses an S-substituted glutathione(in) + ATP + H2O = an S-substituted glutathione(out) + ADP + phosphate + H(+). It catalyses the reaction sphing-4-enine 1-phosphate(in) + ATP + H2O = sphing-4-enine 1-phosphate(out) + ADP + phosphate + H(+). It carries out the reaction leukotriene C4(in) + ATP + H2O = leukotriene C4(out) + ADP + phosphate + H(+). The catalysed reaction is 17beta-estradiol 17-O-(beta-D-glucuronate)(in) + ATP + H2O = 17beta-estradiol 17-O-(beta-D-glucuronate)(out) + ADP + phosphate + H(+). The enzyme catalyses daunorubicin(in) + ATP + H2O = daunorubicin(out) + ADP + phosphate + H(+). It catalyses the reaction vincristine(in) + ATP + H2O = vincristine(out) + ADP + phosphate + H(+). It carries out the reaction 2',3'-cGAMP(in) + ATP + H2O = 2',3'-cGAMP(out) + ADP + phosphate + H(+). The catalysed reaction is S-[(2E,6E,10E)-geranylgeranyl]-L-glutathione(in) + ATP + H2O = S-[(2E,6E,10E)-geranylgeranyl]-L-glutathione(out) + ADP + phosphate + H(+). The enzyme catalyses prostaglandin A2-S-(R)-glutathione(in) + ATP + H2O = prostaglandin A2-S-(R)-glutathione(out) + ADP + phosphate + H(+). It catalyses the reaction prostaglandin A2-S-(S)-glutathione(in) + ATP + H2O = prostaglandin A2-S-(S)-glutathione(out) + ADP + phosphate + H(+). MK 571 inhibits sphingosine 1-phosphate and leukotriene C4 export. Functionally, mediates export of organic anions and drugs from the cytoplasm. Mediates ATP-dependent transport of glutathione and glutathione conjugates, leukotriene C4, estradiol-17-beta-o-glucuronide, methotrexate, antiviral drugs and other xenobiotics. Confers resistance to anticancer drugs by decreasing accumulation of drug in cells, and by mediating ATP- and GSH-dependent drug export. Hydrolyzes ATP with low efficiency. Catalyzes the export of sphingosine 1-phosphate from mast cells independently of their degranulation. Participates in inflammatory response by allowing export of leukotriene C4 from leukotriene C4-synthesizing cells. Exports S-geranylgeranyl-glutathione (GGG) in lymphoid cells and stromal compartments of lymphoid organs. ABCC1 (via extracellular transport) with GGT5 (via GGG catabolism) establish GGG gradients within lymphoid tissues to position P2RY8-positive lymphocytes at germinal centers in lymphoid follicles and restrict their chemotactic transmigration from blood vessels to the bone marrow parenchyma. Mediates basolateral export of GSH-conjugated R- and S-prostaglandin A2 diastereomers in polarized epithelial cells. This is Multidrug resistance-associated protein 1 from Rattus norvegicus (Rat).